Consider the following 155-residue polypeptide: NADPH-dependent 7-cyano-7-deazaguanine reductase (155 aa).

Cysteine 52 functions as the Thioimide intermediate in the catalytic mechanism. Aspartate 59 (proton donor) is an active-site residue. Residues 74–76 (VES) and 93–94 (HE) each bind substrate.

The protein belongs to the GTP cyclohydrolase I family. QueF type 1 subfamily.

It is found in the cytoplasm. It catalyses the reaction 7-aminomethyl-7-carbaguanine + 2 NADP(+) = 7-cyano-7-deazaguanine + 2 NADPH + 3 H(+). It functions in the pathway tRNA modification; tRNA-queuosine biosynthesis. Functionally, catalyzes the NADPH-dependent reduction of 7-cyano-7-deazaguanine (preQ0) to 7-aminomethyl-7-deazaguanine (preQ1). This is NADPH-dependent 7-cyano-7-deazaguanine reductase from Syntrophobacter fumaroxidans (strain DSM 10017 / MPOB).